The sequence spans 612 residues: DNA mismatch repair protein MutL (612 aa).

The protein belongs to the DNA mismatch repair MutL/HexB family.

Its function is as follows. This protein is involved in the repair of mismatches in DNA. It is required for dam-dependent methyl-directed DNA mismatch repair. May act as a 'molecular matchmaker', a protein that promotes the formation of a stable complex between two or more DNA-binding proteins in an ATP-dependent manner without itself being part of a final effector complex. The protein is DNA mismatch repair protein MutL of Herminiimonas arsenicoxydans.